Reading from the N-terminus, the 318-residue chain is UAP56-interacting factor (318 aa).

At M1 the chain carries N-acetylmethionine. The segment at 1–27 (MNRFSTRLMGATATPPPAPPKARSNEN) is disordered. Residue T14 is modified to Phosphothreonine. S24 is subject to Phosphoserine. Positions 27-45 (NLDKIDMSLDDIIKLNRKE) match the UAP56-binding motif motif. Residues S61 and S118 each carry the phosphoserine modification. A Glycyl lysine isopeptide (Lys-Gly) (interchain with G-Cter in SUMO1) cross-link involves residue K140. Polar residues predominate over residues 163-180 (LNRKNNIPNNFTRSGNKL). Positions 163 to 183 (LNRKNNIPNNFTRSGNKLSHQ) are disordered. K261 is covalently cross-linked (Glycyl lysine isopeptide (Lys-Gly) (interchain with G-Cter in SUMO2)).

The protein belongs to the UIF family. In terms of assembly, interacts with DDX39B/UAP56 and NXF1; interaction with DDX39B/UAP56 and NXF1 are mutually exclusive. Interacts with SSRP1; required for its recruitment to mRNAs. Interacts with CHTOP.

Its subcellular location is the nucleus. It localises to the nucleoplasm. The protein localises to the nucleus speckle. In terms of biological role, required for mRNA export from the nucleus to the cytoplasm. Acts as an adapter that uses the DDX39B/UAP56-NFX1 pathway to ensure efficient mRNA export and delivering to the nuclear pore. Associates with spliced and unspliced mRNAs simultaneously with ALYREF/THOC4. In Bos taurus (Bovine), this protein is UAP56-interacting factor (FYTTD1).